The following is a 219-amino-acid chain: Orotate phosphoribosyltransferase (219 aa).

Lys26 lines the 5-phospho-alpha-D-ribose 1-diphosphate pocket. Orotate is bound at residue 34 to 35 (FF). 5-phospho-alpha-D-ribose 1-diphosphate is bound by residues 72–73 (YK), Arg98, Lys99, Lys102, His104, and 124–132 (DDVITAGTA). Residues Thr128 and Arg156 each contribute to the orotate site.

It belongs to the purine/pyrimidine phosphoribosyltransferase family. PyrE subfamily. Homodimer. Mg(2+) is required as a cofactor.

It carries out the reaction orotidine 5'-phosphate + diphosphate = orotate + 5-phospho-alpha-D-ribose 1-diphosphate. It participates in pyrimidine metabolism; UMP biosynthesis via de novo pathway; UMP from orotate: step 1/2. Functionally, catalyzes the transfer of a ribosyl phosphate group from 5-phosphoribose 1-diphosphate to orotate, leading to the formation of orotidine monophosphate (OMP). The protein is Orotate phosphoribosyltransferase of Xylella fastidiosa (strain M23).